Reading from the N-terminus, the 152-residue chain is Protein Smg homolog (152 aa).

The protein belongs to the Smg family.

The chain is Protein Smg homolog from Bordetella avium (strain 197N).